The chain runs to 51 residues: ATP synthase protein 8 (51 aa).

A helical membrane pass occupies residues Leu-7 to Leu-27.

This sequence belongs to the ATPase protein 8 family. F-type ATPases have 2 components, CF(1) - the catalytic core - and CF(0) - the membrane proton channel.

Its subcellular location is the mitochondrion membrane. Functionally, mitochondrial membrane ATP synthase (F(1)F(0) ATP synthase or Complex V) produces ATP from ADP in the presence of a proton gradient across the membrane which is generated by electron transport complexes of the respiratory chain. F-type ATPases consist of two structural domains, F(1) - containing the extramembraneous catalytic core and F(0) - containing the membrane proton channel, linked together by a central stalk and a peripheral stalk. During catalysis, ATP synthesis in the catalytic domain of F(1) is coupled via a rotary mechanism of the central stalk subunits to proton translocation. Part of the complex F(0) domain. Minor subunit located with subunit a in the membrane. The polypeptide is ATP synthase protein 8 (MT-ATP8) (Limulus polyphemus (Atlantic horseshoe crab)).